Here is a 496-residue protein sequence, read N- to C-terminus: L-arabinose isomerase (496 aa).

4 residues coordinate Mn(2+): Glu302, Glu329, His346, and His445.

This sequence belongs to the arabinose isomerase family. Mn(2+) is required as a cofactor.

It carries out the reaction beta-L-arabinopyranose = L-ribulose. The protein operates within carbohydrate degradation; L-arabinose degradation via L-ribulose; D-xylulose 5-phosphate from L-arabinose (bacterial route): step 1/3. Catalyzes the conversion of L-arabinose to L-ribulose. This is L-arabinose isomerase from Thermotoga neapolitana (strain ATCC 49049 / DSM 4359 / NBRC 107923 / NS-E).